We begin with the raw amino-acid sequence, 438 residues long: MALRGVYAQLLNRGPGLRVFRSWSSATAQTEKGEKTQSRSAKPSRPEFDWRDPLLLEEQLTADEILIRDTFRTYCQERLMPRILLANRNEVFHREIISEMGELGMLGPTIQGYSCAGVSSVAYGLLARELERVDSGYRSAMSVQSSLVMYPIYAYGSEEQKQKYLPRLAKGELLGCFGLTEPNHGSDPSGMETRARHNPSSRSYILSGSKTWITNSPVADLLIVWARCEDSCIRGFLLEKGMRGLSTPRIEGKFSLRASSTGMIIMDDVEVPEENVLPGVSGLAGPFGCLNNARYGITWGVLGAAEFCLHTARQYTLDRIQFGVPLAKNQLIQKKLADMLTEITLGLHACLQLGRLKDQDKAAPEMVSLLKRNNCGKALDIARQARDMLGGNGISDEYHVIRHVMNLESVNTYEGTHDIHALILGRAITGIQAFVAGK.

The N-terminal 44 residues, 1–44, are a transit peptide targeting the mitochondrion; the sequence is MALRGVYAQLLNRGPGLRVFRSWSSATAQTEKGEKTQSRSAKPS. Substrate is bound by residues 138-139 and S186; that span reads RS. FAD contacts are provided by residues 177–186, S186, and 212–214; these read FGLTEPNHGS and WIT. K240 carries the post-translational modification N6-acetyllysine. 287–294 contributes to the substrate binding site; that stretch reads FGCLNNAR. FAD-binding positions include R319, Q330, and 387–391; that span reads DMLGG. The Proton acceptor role is filled by E414. Substrate is bound at residue G415. Residues T416, 416–418, and F434 each bind FAD; that span reads THD.

It belongs to the acyl-CoA dehydrogenase family. In terms of assembly, homotetramer. FAD is required as a cofactor.

It is found in the mitochondrion matrix. It carries out the reaction glutaryl-CoA + oxidized [electron-transfer flavoprotein] + 2 H(+) = (2E)-butenoyl-CoA + reduced [electron-transfer flavoprotein] + CO2. It participates in amino-acid metabolism; lysine degradation. Its pathway is amino-acid metabolism; tryptophan metabolism. In terms of biological role, catalyzes the oxidative decarboxylation of glutaryl-CoA to crotonyl-CoA and CO(2) in the degradative pathway of L-lysine, L-hydroxylysine, and L-tryptophan metabolism. It uses electron transfer flavoprotein as its electron acceptor. This chain is Glutaryl-CoA dehydrogenase, mitochondrial (GCDH), found in Bos taurus (Bovine).